The chain runs to 191 residues: Protein UL140 (191 aa).

Residues 28–48 (TLVVFGFIVTLLFFLFMLYFW) form a helical membrane-spanning segment.

The protein localises to the host membrane. This Homo sapiens (Human) protein is Protein UL140 (UL140).